Consider the following 214-residue polypeptide: Large ribosomal subunit protein uL16-like (214 aa).

Belongs to the universal ribosomal protein uL16 family. As to quaternary structure, component of the 60S large ribosomal subunit (LSU).

Its subcellular location is the cytoplasm. Its function is as follows. Testis-specific component of the ribosome, which is required for the transition from prophase to metaphase in male meiosis I. Compensates for the inactivated X-linked RPL10 paralog during spermatogenesis. The ribosome is a large ribonucleoprotein complex responsible for the synthesis of proteins in the cell. The small ribosomal subunit (SSU) binds messenger RNAs (mRNAs) and translates the encoded message by selecting cognate aminoacyl-transfer RNA (tRNA) molecules. The large subunit (LSU) contains the ribosomal catalytic site termed the peptidyl transferase center (PTC), which catalyzes the formation of peptide bonds, thereby polymerizing the amino acids delivered by tRNAs into a polypeptide chain. The nascent polypeptides leave the ribosome through a tunnel in the LSU and interact with protein factors that function in enzymatic processing, targeting, and the membrane insertion of nascent chains at the exit of the ribosomal tunnel. This is Large ribosomal subunit protein uL16-like (RPL10L) from Bos taurus (Bovine).